We begin with the raw amino-acid sequence, 196 residues long: Putative NADH dehydrogenase/NAD(P)H nitroreductase PST_3601 (196 aa).

This sequence belongs to the nitroreductase family. HadB/RutE subfamily. Requires FMN as cofactor.

The polypeptide is Putative NADH dehydrogenase/NAD(P)H nitroreductase PST_3601 (Stutzerimonas stutzeri (strain A1501) (Pseudomonas stutzeri)).